A 179-amino-acid chain; its full sequence is 3-hydroxyanthranilate 3,4-dioxygenase 2 (179 aa).

An O2-binding site is contributed by Arg44. Residues His48, Glu60, and His99 each contribute to the Fe cation site. Glu60 is a substrate binding site. Residues Arg103 and Glu113 each contribute to the substrate site.

It belongs to the 3-HAO family. Fe(2+) serves as cofactor.

The protein localises to the cytoplasm. The enzyme catalyses 3-hydroxyanthranilate + O2 = (2Z,4Z)-2-amino-3-carboxymuconate 6-semialdehyde. It functions in the pathway cofactor biosynthesis; NAD(+) biosynthesis; quinolinate from L-kynurenine: step 3/3. Functionally, catalyzes the oxidative ring opening of 3-hydroxyanthranilate to 2-amino-3-carboxymuconate semialdehyde, which spontaneously cyclizes to quinolinate. The sequence is that of 3-hydroxyanthranilate 3,4-dioxygenase 2 (bna1-2) from Aspergillus oryzae (strain ATCC 42149 / RIB 40) (Yellow koji mold).